A 180-amino-acid polypeptide reads, in one-letter code: Molybdopterin synthase catalytic subunit (180 aa).

A compositionally biased stretch (polar residues) spans Met1–Pro10. The disordered stretch occupies residues Met1–Leu31. Residues Thr21–Leu31 show a composition bias toward low complexity. Substrate-binding positions include His131 to Arg132, Lys147, and Lys154 to Glu156.

This sequence belongs to the MoaE family. MOCS2B subfamily. As to quaternary structure, heterotetramer; composed of 2 small (MOCS2A) and 2 large (MOCS2B) subunits.

Its subcellular location is the cytoplasm. The enzyme catalyses 2 [molybdopterin-synthase sulfur-carrier protein]-C-terminal-Gly-aminoethanethioate + cyclic pyranopterin phosphate + H2O = molybdopterin + 2 [molybdopterin-synthase sulfur-carrier protein]-C-terminal Gly-Gly + 2 H(+). Its pathway is cofactor biosynthesis; molybdopterin biosynthesis. In terms of biological role, catalytic subunit of the molybdopterin synthase complex, a complex that catalyzes the conversion of precursor Z into molybdopterin. Acts by mediating the incorporation of 2 sulfur atoms from thiocarboxylated MOCS2A into precursor Z to generate a dithiolene group. This chain is Molybdopterin synthase catalytic subunit, found in Aspergillus niger (strain ATCC MYA-4892 / CBS 513.88 / FGSC A1513).